Consider the following 292-residue polypeptide: High-affinity heme uptake system protein IsdE (292 aa).

The first 19 residues, 1 to 19 (MRIIKYLTILVISVVILTS), serve as a signal peptide directing secretion. C20 carries N-palmitoyl cysteine lipidation. The S-diacylglycerol cysteine moiety is linked to residue C20. In terms of domain architecture, Fe/B12 periplasmic-binding spans 35–291 (RIVPTTVALT…QLYDLFYKDK (257 aa)). 6 residues coordinate heme: V41, A42, S60, Y61, M78, and H229.

This sequence belongs to the bacterial solute-binding protein 8 family. Heme b serves as cofactor.

The protein localises to the cell membrane. Its function is as follows. Involved in heme (porphyrin) scavenging. Binds Fe(2+) and Fe(3+) heme but the largest fraction is Fe(2+) heme. Functions as a high-affinity heme binding protein and probably has a role in relaying heme-iron from cell wall-anchored isd proteins receptors to the probable permease IsdF. This Staphylococcus aureus (strain MRSA252) protein is High-affinity heme uptake system protein IsdE (isdE).